The chain runs to 239 residues: Sugar fermentation stimulation protein homolog (239 aa).

The protein belongs to the SfsA family.

The polypeptide is Sugar fermentation stimulation protein homolog (Synechococcus sp. (strain JA-3-3Ab) (Cyanobacteria bacterium Yellowstone A-Prime)).